The sequence spans 542 residues: Phosphoglucomutase (542 aa).

Substrate-binding positions include Thr17, Arg21, 112–113 (SH), and Lys125. Catalysis depends on Ser112, which acts as the Phosphoserine intermediate. Residue Ser112 participates in Mg(2+) binding. The Mg(2+) site is built by Asp276, Asp278, and Asp280. Substrate contacts are provided by residues 280 to 281 (DR), Thr343, 362 to 364 (EES), Lys375, and Arg495.

This sequence belongs to the phosphohexose mutase family. It depends on Mg(2+) as a cofactor.

The catalysed reaction is alpha-D-glucose 1-phosphate = alpha-D-glucose 6-phosphate. Its function is as follows. This enzyme participates in both the breakdown and synthesis of glucose. Required for the synthesis of capsular polysaccharide and normal lipopolysaccharide. This chain is Phosphoglucomutase (pgm), found in Rhizobium radiobacter (Agrobacterium tumefaciens).